The sequence spans 155 residues: MTNEEPKRTLVISTIENGTVIDHIKAGEALTVLRILGITGSTRECVSVATNVSSKAQEKKDVVKIEKRELKAQEVDRIALVAPNATINIIRNFRVIEKKGVIIPPVLIGVLRCPNPCCITNTNEPVMSRFEMHGKKAVCSYCDAVISSDISSHII.

4 residues coordinate Zn(2+): Cys-113, Cys-118, Cys-139, and Cys-142.

This sequence belongs to the PyrI family. Contains catalytic and regulatory chains. Zn(2+) is required as a cofactor.

In terms of biological role, involved in allosteric regulation of aspartate carbamoyltransferase. This Methanospirillum hungatei JF-1 (strain ATCC 27890 / DSM 864 / NBRC 100397 / JF-1) protein is Aspartate carbamoyltransferase regulatory chain.